Consider the following 178-residue polypeptide: Large ribosomal subunit protein uL6 (178 aa).

The protein belongs to the universal ribosomal protein uL6 family. Part of the 50S ribosomal subunit.

Its function is as follows. This protein binds to the 23S rRNA, and is important in its secondary structure. It is located near the subunit interface in the base of the L7/L12 stalk, and near the tRNA binding site of the peptidyltransferase center. The sequence is that of Large ribosomal subunit protein uL6 from Staphylococcus carnosus (strain TM300).